A 1009-amino-acid chain; its full sequence is Glutamate receptor ionotropic, delta-1 (1009 aa).

The signal sequence occupies residues 1 to 20 (MEALTLWLLPWICQCVSVRA). Positions 21 to 436 (DSIIHIGAIF…ERPMGSRLQG (416 aa)) are interaction with CBLN1. The Extracellular portion of the chain corresponds to 21 to 562 (DSIIHIGAIF…SIFSLFAPFD (542 aa)). Intrachain disulfides connect C80-C351, C96-C128, and C294-C306. N-linked (GlcNAc...) asparagine glycans are attached at residues N131 and N200. 2 N-linked (GlcNAc...) asparagine glycosylation sites follow: N422 and N498. 3 residues coordinate Ca(2+): E527, V530, and D531. Residues 563–583 (FAVWACIAAAIPVVGVLIFVL) form a helical membrane-spanning segment. Residues 584-637 (NRIQAVRAQSAAQPRPSASATLHSAIWIVYGAFVQQGGESSVNSMAMRIVMGSW) lie on the Cytoplasmic side of the membrane. A helical membrane pass occupies residues 638–658 (WLFTLIVCSSYTANLAAFLTV). At 659–830 (SRMDNPIRTF…ADGKSLKLHS (172 aa)) the chain is on the extracellular side. Ca(2+)-binding residues include D753, D755, and S757. A helical transmembrane segment spans residues 831–851 (FAGVFCILAIGLLLACLVAAL). The Cytoplasmic portion of the chain corresponds to 852 to 1009 (ELWWNSNRCH…ALDTSHGTSI (158 aa)). A compositionally biased stretch (polar residues) spans 930 to 942 (FLPEQSSHGTSRT). Residues 930–954 (FLPEQSSHGTSRTLSSGPSSNLPLP) form a disordered region. Low complexity predominate over residues 943–954 (LSSGPSSNLPLP).

It belongs to the glutamate-gated ion channel (TC 1.A.10.1) family. GRID1 subfamily. As to quaternary structure, homodimer. Interacts (via extracellular N-terminal domain) with CBLN1 (via C1q domain), and more weakly with CBLN2; the interactions mediate the trans-synaptic adhesion complexes also with neurexins and are required for ligand-gated cation channel activity.

The protein resides in the postsynaptic cell membrane. The enzyme catalyses Ca(2+)(in) = Ca(2+)(out). It catalyses the reaction Na(+)(in) = Na(+)(out). In terms of biological role, member of the ionotropic glutamate receptor family, which plays a crucial role in synaptic organization and signal transduction in the central nervous system. Although it shares structural features with ionotropic glutamate receptors, does not bind glutamate as a primary ligand. Instead, forms trans-synaptic adhesion complexes with presynaptic neurexins and cerebellins, regulating NMDA and AMPA receptor activity and influencing synaptic plasticity through signal transduction. In the presence of neurexins and cerebellins, forms cation-selective channels that are proposed to be gated by glycine and D-serine. However, recent research disputes this ligand-gated cation channel activity. Cation-selective ion channel can be triggered by GRM1 in dopaminergic neurons. Also acts as a receptor for GABA, modulating inhibitory synaptic plasticity through non-ionotropic mechanisms. This chain is Glutamate receptor ionotropic, delta-1, found in Homo sapiens (Human).